Consider the following 445-residue polypeptide: C-terminal-binding protein 2 (445 aa).

An Asymmetric dimethylarginine modification is found at Arg22. NAD(+) contacts are provided by residues Ser106, 186 to 191, Asp210, 243 to 249, 270 to 272, and Asp296; these read IGFGRT, CNLNEHN, and AAR. The active site involves Arg272. The active site involves Glu301. His321 acts as the Proton donor in catalysis. NAD(+) is bound at residue 321–324; it reads HTAW. The disordered stretch occupies residues 414–445; it reads THNLPTVAHPSQAPSPNQPTKHGDNREHPNEQ. Ser428 carries the post-translational modification Phosphoserine. Over residues 434-445 the composition is skewed to basic and acidic residues; that stretch reads KHGDNREHPNEQ.

It belongs to the D-isomer specific 2-hydroxyacid dehydrogenase family. As to quaternary structure, can form homodimers or heterodimers of CTBP1 and CTBP2. Interacts with HIPK2 and ZNF217. Interacts with PRDM16; represses white adipose tissue (WAT)-specific genes expression. Interacts with PNN, NRIP1 and WIZ. Interacts with MCRIP1. In terms of assembly, (Microbial infection) Interacts with human adenovirus 5 E1A protein; this interaction seems to potentiate viral replication. In terms of tissue distribution, ubiquitous. Highest levels in heart, skeletal muscle, and pancreas.

It localises to the nucleus. Its subcellular location is the synapse. In terms of biological role, corepressor targeting diverse transcription regulators. Functions in brown adipose tissue (BAT) differentiation. Functionally, isoform 2 probably acts as a scaffold for specialized synapses. In Homo sapiens (Human), this protein is C-terminal-binding protein 2 (CTBP2).